Consider the following 168-residue polypeptide: 6,7-dimethyl-8-ribityllumazine synthase (168 aa).

5-amino-6-(D-ribitylamino)uracil-binding positions include Phe24, 58-60, and 82-84; these read ALE and AVI. 87–88 is a (2S)-2-hydroxy-3-oxobutyl phosphate binding site; that stretch reads ET. His90 acts as the Proton donor in catalysis. Asn115 is a 5-amino-6-(D-ribitylamino)uracil binding site. Arg129 lines the (2S)-2-hydroxy-3-oxobutyl phosphate pocket.

The protein belongs to the DMRL synthase family.

It catalyses the reaction (2S)-2-hydroxy-3-oxobutyl phosphate + 5-amino-6-(D-ribitylamino)uracil = 6,7-dimethyl-8-(1-D-ribityl)lumazine + phosphate + 2 H2O + H(+). Its pathway is cofactor biosynthesis; riboflavin biosynthesis; riboflavin from 2-hydroxy-3-oxobutyl phosphate and 5-amino-6-(D-ribitylamino)uracil: step 1/2. Functionally, catalyzes the formation of 6,7-dimethyl-8-ribityllumazine by condensation of 5-amino-6-(D-ribitylamino)uracil with 3,4-dihydroxy-2-butanone 4-phosphate. This is the penultimate step in the biosynthesis of riboflavin. The protein is 6,7-dimethyl-8-ribityllumazine synthase of Paraburkholderia phytofirmans (strain DSM 17436 / LMG 22146 / PsJN) (Burkholderia phytofirmans).